We begin with the raw amino-acid sequence, 130 residues long: Small ribosomal subunit protein uS9 (130 aa).

The protein belongs to the universal ribosomal protein uS9 family.

The chain is Small ribosomal subunit protein uS9 from Nitrosomonas eutropha (strain DSM 101675 / C91 / Nm57).